The sequence spans 139 residues: Actin-depolymerizing factor 3 (139 aa).

The ADF-H domain maps to 7 to 139; sequence GVAVNDECML…SLDEIKDRAR (133 aa).

This sequence belongs to the actin-binding proteins ADF family. Expressed in all tissues except pollen.

Its subcellular location is the cytoplasm. In terms of biological role, actin-depolymerizing protein. Severs actin filaments (F-actin) and binds to actin monomers. In Zea mays (Maize), this protein is Actin-depolymerizing factor 3 (ADF3).